A 423-amino-acid chain; its full sequence is MTEIIDVKAREILDSRGNPTVEVDVVLACGVQGRAAVPSGASTGTREALEMRDQDASRFLGKGVLKAVANVNEVIAPEIIGFDTMDQAGLDRTMIDMDGTENKSRLGANAILGVSMAAARAAAKAAEIPLYRHIGGINARILPVPMMNIINGGAHAPNNLDIQEFMILPFGAPSLCEAVRMGAETFHTLKKILKKEGLSTAVGDEGGFAPNLKSNEEAIEFIIRAIEEAGYRPGKDIGIALDAAASEFYKNGKYVFESEGQVLTSEELVDYYESLVTRYALYSIEDGLAEQDWTGWQMMTKRLGDSLQIVGDDVFVTNPDIFRKGISEGIGNSILIKLNQIGTVTETLDTIQMAKESGYTTVISHRSGETEDTFIADLAVAVNAGQIKTGSLSRSDRVAKYNQLIRIEEALGMGGIFPEDLFV.

Residue Gln163 coordinates (2R)-2-phosphoglycerate. The Proton donor role is filled by Glu205. Mg(2+) contacts are provided by Asp242, Glu285, and Asp312. (2R)-2-phosphoglycerate contacts are provided by Lys337, Arg366, Ser367, and Lys388. Lys337 serves as the catalytic Proton acceptor.

It belongs to the enolase family. Mg(2+) is required as a cofactor.

It localises to the cytoplasm. The protein localises to the secreted. It is found in the cell surface. It carries out the reaction (2R)-2-phosphoglycerate = phosphoenolpyruvate + H2O. It participates in carbohydrate degradation; glycolysis; pyruvate from D-glyceraldehyde 3-phosphate: step 4/5. Functionally, catalyzes the reversible conversion of 2-phosphoglycerate (2-PG) into phosphoenolpyruvate (PEP). It is essential for the degradation of carbohydrates via glycolysis. The sequence is that of Enolase from Desulforapulum autotrophicum (strain ATCC 43914 / DSM 3382 / VKM B-1955 / HRM2) (Desulfobacterium autotrophicum).